Reading from the N-terminus, the 85-residue chain is Neurotoxin 60.35 (85 aa).

The N-terminal stretch at 1-23 is a signal peptide; sequence MKFCVAVSLLIIASMAGVISVSG. An LCN-type CS-alpha/beta domain is found at 24-85; the sequence is YDVYPRDYAG…NFLSVIWKQC (62 aa). Disulfide bonds link C38/C60, C46/C65, and C50/C67.

The protein belongs to the long (3 C-C) scorpion toxin superfamily. In terms of tissue distribution, expressed by the venom gland.

Its subcellular location is the secreted. The chain is Neurotoxin 60.35 from Lychas mucronatus (Chinese swimming scorpion).